Consider the following 124-residue polypeptide: MATVNQLVRKPRVRKVAKSNVPALEACPQKRGVCTRVYTTTPKKPNSALRKVCRVRLTNGFEVTSYIGGEGHNLQEHSVILIRGGRVKDLPGVRYHTVRGALDCSGVKDRKQARSKYGVKNAKA.

The residue at position 89 (Asp-89) is a 3-methylthioaspartic acid.

It belongs to the universal ribosomal protein uS12 family. Part of the 30S ribosomal subunit. Contacts proteins S8 and S17. May interact with IF1 in the 30S initiation complex.

With S4 and S5 plays an important role in translational accuracy. Functionally, interacts with and stabilizes bases of the 16S rRNA that are involved in tRNA selection in the A site and with the mRNA backbone. Located at the interface of the 30S and 50S subunits, it traverses the body of the 30S subunit contacting proteins on the other side and probably holding the rRNA structure together. The combined cluster of proteins S8, S12 and S17 appears to hold together the shoulder and platform of the 30S subunit. This chain is Small ribosomal subunit protein uS12, found in Erwinia amylovora (Fire blight bacteria).